Here is a 129-residue protein sequence, read N- to C-terminus: Ribonuclease P protein component (129 aa).

It belongs to the RnpA family. As to quaternary structure, consists of a catalytic RNA component (M1 or rnpB) and a protein subunit.

The catalysed reaction is Endonucleolytic cleavage of RNA, removing 5'-extranucleotides from tRNA precursor.. RNaseP catalyzes the removal of the 5'-leader sequence from pre-tRNA to produce the mature 5'-terminus. It can also cleave other RNA substrates such as 4.5S RNA. The protein component plays an auxiliary but essential role in vivo by binding to the 5'-leader sequence and broadening the substrate specificity of the ribozyme. The sequence is that of Ribonuclease P protein component from Corynebacterium jeikeium (strain K411).